Consider the following 152-residue polypeptide: Xanthine-guanine phosphoribosyltransferase (152 aa).

5-phospho-alpha-D-ribose 1-diphosphate is bound by residues 37-38, Arg-69, and 88-96; these read RG and DDLVDTGGT. Arg-69 is a GMP binding site. Residue Asp-89 participates in Mg(2+) binding. Guanine is bound by residues Asp-92 and Ile-135. Positions 92 and 135 each coordinate xanthine. GMP is bound by residues 92–96 and 134–135; these read DTGGT and WI.

It belongs to the purine/pyrimidine phosphoribosyltransferase family. XGPT subfamily. In terms of assembly, homotetramer. The cofactor is Mg(2+).

The protein localises to the cell inner membrane. The catalysed reaction is GMP + diphosphate = guanine + 5-phospho-alpha-D-ribose 1-diphosphate. The enzyme catalyses XMP + diphosphate = xanthine + 5-phospho-alpha-D-ribose 1-diphosphate. It carries out the reaction IMP + diphosphate = hypoxanthine + 5-phospho-alpha-D-ribose 1-diphosphate. It participates in purine metabolism; GMP biosynthesis via salvage pathway; GMP from guanine: step 1/1. It functions in the pathway purine metabolism; XMP biosynthesis via salvage pathway; XMP from xanthine: step 1/1. Its function is as follows. Purine salvage pathway enzyme that catalyzes the transfer of the ribosyl-5-phosphate group from 5-phospho-alpha-D-ribose 1-diphosphate (PRPP) to the N9 position of the 6-oxopurines guanine and xanthine to form the corresponding ribonucleotides GMP (guanosine 5'-monophosphate) and XMP (xanthosine 5'-monophosphate), with the release of PPi. To a lesser extent, also acts on hypoxanthine. In Yersinia pseudotuberculosis serotype O:1b (strain IP 31758), this protein is Xanthine-guanine phosphoribosyltransferase.